Consider the following 212-residue polypeptide: SOSS complex subunit B1 (212 aa).

The segment at residues 22–92 (IVLETGRVTK…TLYTGRGGDL (71 aa)) is a DNA-binding region (OB). The segment at 110–212 (EPNPEYNTQQ…GKETRRSSKR (103 aa)) is disordered. A compositionally biased stretch (polar residues) spans 114–130 (EYNTQQAPNKSVQNNDN). Phosphothreonine; by ATM is present on Thr-117. The span at 131 to 148 (SPTAPQATTGPPAASPAS) shows a compositional bias: low complexity. The segment covering 149–160 (ENQNGNGLSTQL) has biased composition (polar residues). Over residues 166-178 (PHPSHTPSHPPST) the composition is skewed to low complexity.

Belongs to the SOSS-B family. SOSS-B1 subfamily. As to quaternary structure, component of the SOSS complex, composed of SOSS-B (SOSS-B1/NABP2 or SOSS-B2/NABP1), SOSS-A/INTS3 and SOSS-C/INIP. SOSS complexes containing SOSS-B1/NABP2 are more abundant than complexes containing SOSS-B2/NABP1. Directly interacts with ATM, SOSS-A/INTS3 and RAD51. Interacts with INTS7. Post-translationally, phosphorylated by ATM in response to DNA damage. Phosphorylation prevents degradation by the proteasome, hence stabilization of the protein and accumulation within cells. Ubiquitinated in a FBXL5-dependent manner, leading to proteasomal degradation.

The protein localises to the nucleus. Component of the SOSS complex, a multiprotein complex that functions downstream of the MRN complex to promote DNA repair and G2/M checkpoint. In the SOSS complex, acts as a sensor of single-stranded DNA that binds to single-stranded DNA, in particular to polypyrimidines. The SOSS complex associates with DNA lesions and influences diverse endpoints in the cellular DNA damage response including cell-cycle checkpoint activation, recombinational repair and maintenance of genomic stability. Required for efficient homologous recombination-dependent repair of double-strand breaks (DSBs) and ATM-dependent signaling pathways. In Mus musculus (Mouse), this protein is SOSS complex subunit B1 (Nabp2).